Here is a 157-residue protein sequence, read N- to C-terminus: SsrA-binding protein (157 aa).

Residues 133 to 157 (LHDKRESEKKRDWGREKGRLLRARG) are disordered. A compositionally biased stretch (basic and acidic residues) spans 135 to 151 (DKRESEKKRDWGREKGR).

The protein belongs to the SmpB family.

It is found in the cytoplasm. Functionally, required for rescue of stalled ribosomes mediated by trans-translation. Binds to transfer-messenger RNA (tmRNA), required for stable association of tmRNA with ribosomes. tmRNA and SmpB together mimic tRNA shape, replacing the anticodon stem-loop with SmpB. tmRNA is encoded by the ssrA gene; the 2 termini fold to resemble tRNA(Ala) and it encodes a 'tag peptide', a short internal open reading frame. During trans-translation Ala-aminoacylated tmRNA acts like a tRNA, entering the A-site of stalled ribosomes, displacing the stalled mRNA. The ribosome then switches to translate the ORF on the tmRNA; the nascent peptide is terminated with the 'tag peptide' encoded by the tmRNA and targeted for degradation. The ribosome is freed to recommence translation, which seems to be the essential function of trans-translation. The protein is SsrA-binding protein of Nitrobacter winogradskyi (strain ATCC 25391 / DSM 10237 / CIP 104748 / NCIMB 11846 / Nb-255).